A 753-amino-acid chain; its full sequence is MTILNHTLGFPRVGLRRELKKAQESYWAGNSTREELLAVGRELRARHWDQQKQAGIDLLPVGDFAWYDHVLTTSLLLGNVPARHQNKDGSVDIDTLFRIGRGRAPTGEPAAAAEMTKWFNTNYHYMVPEFVKGQQFKLTWTQLLDEVDEALALGHKVKPVLLGPITWLWLGKVKGEQFDRLSLLNDILPVYQQVLAELAKRGIEWVQIDEPALVLELPQAWLDAYKPAYDALQGQVKLLLTTYFEGVTPNLDTITALPVQGLHVDLVHGKDDVVELHKRLPSDWLLSAGLINGRNVWRADLTEKYVQIKDIVGKRDLWVASSCSLLHSPIDLSVETRLDAEVKSWFAFALQKCHELALLCDALNSGDTAALAEWSAPIQARRHSTRVHNPAVEKRLAAITAQDSQRANVYEVRAEAQRARFKLPAWPTTTIGSFPQTTEIRTLRLDFKKGNLDANNYRTGIAEHIRQAIVEQERLGLDVLVHGEAERNDMVEYFGEHLDGFVFTQNGWVQSYGSRCVKPPIVIGDVSRPAPITVEWAKYAQSMTDKPVKGMLTGPVTILCWSFPREDVSRETIAKQIALALRDEVADLEAAGIGIIQIDEPALREGLPLRRSDWDAYLQWGVEAFRINAAVAKDDTQIHTHMCYCEFNDIMDSIAALDADVITIETSRSDMELLESFEEFDYPNEIGPGVYDIHSPNVPSVEWIEALLKKAAKRIPAERLWVNPDCGLKTRGWPETRAALANMVQAAQNLRRG.

5-methyltetrahydropteroyltri-L-glutamate is bound by residues 17-20 and lysine 117; that span reads RELK. Residues 431-433 and glutamate 484 each bind L-homocysteine; that span reads IGS. L-methionine contacts are provided by residues 431-433 and glutamate 484; that span reads IGS. Residues 515-516 and tryptophan 561 each bind 5-methyltetrahydropteroyltri-L-glutamate; that span reads RC. An L-homocysteine-binding site is contributed by aspartate 599. Residue aspartate 599 coordinates L-methionine. Glutamate 605 lines the 5-methyltetrahydropteroyltri-L-glutamate pocket. Zn(2+) contacts are provided by histidine 641, cysteine 643, and glutamate 665. Histidine 694 acts as the Proton donor in catalysis. Cysteine 726 is a binding site for Zn(2+).

The protein belongs to the vitamin-B12 independent methionine synthase family. Zn(2+) is required as a cofactor.

It carries out the reaction 5-methyltetrahydropteroyltri-L-glutamate + L-homocysteine = tetrahydropteroyltri-L-glutamate + L-methionine. It participates in amino-acid biosynthesis; L-methionine biosynthesis via de novo pathway; L-methionine from L-homocysteine (MetE route): step 1/1. In terms of biological role, catalyzes the transfer of a methyl group from 5-methyltetrahydrofolate to homocysteine resulting in methionine formation. In Escherichia coli O157:H7, this protein is 5-methyltetrahydropteroyltriglutamate--homocysteine methyltransferase.